The following is a 2037-amino-acid chain: Fatty acid synthase subunit beta (2037 aa).

An acetyltransferase region spans residues 1–453 (MSTHRPFQLT…VYDTFDGSDF (453 aa)). Residue S261 is the For acetyltransferase activity of the active site. The segment at 465–798 (VKLITELPVH…GSRVMTSKES (334 aa)) is enoyl reductase. A dehydratase region spans residues 1132 to 1612 (GTELNWLQAF…LPNDTLQTTM (481 aa)). The region spanning 1506–1634 (NGKTIEESVI…KVETRNVETE (129 aa)) is the MaoC-like domain. The malonyl/palmitoyl transferase stretch occupies residues 1613-1833 (EHVGMINGRK…MTMQVAVPRD (221 aa)). The For malonyltransferase activity role is filled by S1796.

Belongs to the fungal fatty acid synthetase subunit beta family. [Alpha(6)beta(6)] hexamers of two multifunctional subunits (alpha and beta).

The catalysed reaction is acetyl-CoA + n malonyl-CoA + 2n NADPH + 4n H(+) = a long-chain-acyl-CoA + n CoA + n CO2 + 2n NADP(+).. It carries out the reaction holo-[ACP] + acetyl-CoA = acetyl-[ACP] + CoA. It catalyses the reaction holo-[ACP] + malonyl-CoA = malonyl-[ACP] + CoA. The enzyme catalyses a (3R)-hydroxyacyl-[ACP] = a (2E)-enoyl-[ACP] + H2O. The catalysed reaction is a 2,3-saturated acyl-[ACP] + NAD(+) = a (2E)-enoyl-[ACP] + NADH + H(+). It carries out the reaction (9Z)-octadecenoyl-[ACP] + H2O = (9Z)-octadecenoate + holo-[ACP] + H(+). Its function is as follows. Fatty acid synthetase catalyzes the formation of long-chain fatty acids from acetyl-CoA, malonyl-CoA and NADPH. The beta subunit contains domains for: [acyl-carrier-protein] acetyltransferase and malonyltransferase, S-acyl fatty acid synthase thioesterase, enoyl-[acyl-carrier-protein] reductase, and 3-hydroxypalmitoyl-[acyl-carrier-protein] dehydratase. This is Fatty acid synthase subunit beta (FAS1) from Candida albicans (Yeast).